The chain runs to 488 residues: Probable phenylalanine--tRNA ligase alpha subunit (488 aa).

A contains the major tRNA-Phe binding sites region spans residues 1–146; that stretch reads MSIEQDILNL…KRKLVDINKK (146 aa). L-phenylalanine-binding positions include T315, 363–365, and Y403; that span reads QVE. Position 405 (E405) interacts with Mg(2+). F429 serves as a coordination point for L-phenylalanine.

It belongs to the class-II aminoacyl-tRNA synthetase family. Phe-tRNA synthetase alpha subunit type 2 subfamily. Tetramer of two alpha and two beta subunits. Mg(2+) serves as cofactor.

It is found in the cytoplasm. It catalyses the reaction tRNA(Phe) + L-phenylalanine + ATP = L-phenylalanyl-tRNA(Phe) + AMP + diphosphate + H(+). The protein is Probable phenylalanine--tRNA ligase alpha subunit of Enterocytozoon bieneusi (strain H348) (Microsporidian parasite).